The following is a 380-amino-acid chain: Cytochrome b (380 aa).

The next 4 membrane-spanning stretches (helical) occupy residues 33–53, 77–98, 113–133, and 178–198; these read FGSLLGLCLVTQILTGLFLAM, WLIRNIHANGASFFFICLYLHI, WNIGVVLFLLVMMTAFVGYVL, and FFAFHFLFPFIIVALTVLHFF. Positions 83 and 97 each coordinate heme b. His-182 and His-196 together coordinate heme b. Residue His-201 coordinates a ubiquinone. Helical transmembrane passes span 226–246, 288–308, 320–340, and 347–367; these read YKDLFGLVLLLLALSSLSFFS, LGGVLALLASILILMLVPILH, LTQLLFWILVADVMILTWIGG, and FIAVGQIASVLYFTLFLILIP.

Belongs to the cytochrome b family. The cytochrome bc1 complex contains 3 respiratory subunits (MT-CYB, CYC1 and UQCRFS1), 2 core proteins (UQCRC1 and UQCRC2) and probably 6 low-molecular weight proteins. The cofactor is heme b.

The protein resides in the mitochondrion inner membrane. Functionally, component of the ubiquinol-cytochrome c reductase complex (complex III or cytochrome b-c1 complex) that is part of the mitochondrial respiratory chain. The b-c1 complex mediates electron transfer from ubiquinol to cytochrome c. Contributes to the generation of a proton gradient across the mitochondrial membrane that is then used for ATP synthesis. This Zenopsis nebulosa (Mirror dory) protein is Cytochrome b (mt-cyb).